A 465-amino-acid chain; its full sequence is Cysteine--tRNA ligase (465 aa).

Zn(2+) is bound at residue cysteine 27. A 'HIGH' region motif is present at residues 29–39 (PTVYDDAHLGH). Residues cysteine 207, histidine 237, and glutamate 241 each coordinate Zn(2+). The short motif at 269–273 (KMSKS) is the 'KMSKS' region element. Lysine 272 serves as a coordination point for ATP.

The protein belongs to the class-I aminoacyl-tRNA synthetase family. As to quaternary structure, monomer. Zn(2+) serves as cofactor.

Its subcellular location is the cytoplasm. It catalyses the reaction tRNA(Cys) + L-cysteine + ATP = L-cysteinyl-tRNA(Cys) + AMP + diphosphate. The polypeptide is Cysteine--tRNA ligase (Helicobacter pylori (strain P12)).